A 235-amino-acid polypeptide reads, in one-letter code: FsC-acetyl coenzyme A-N(2)-transacetylase (235 aa).

An N-acetyltransferase domain is found at 14–190 (LELVPLGHEH…RYSITREEWL (177 aa)). CoA contacts are provided by residues 106-108 (FRV), Gly114, Asn146, and 151-153 (AVM).

It participates in siderophore biosynthesis. In terms of biological role, fsC-acetyl coenzyme A-N(2)-transacetylase; part of the siderophore biosynthetic pathway. Aspergillus fumigatus produces 4 types of siderophores, low-molecular-mass iron chelators, including excreted fusarinine C (FsC) and triacetylfusarinine C (TAFC) for iron uptake and intacellular ferricrocin (FC) for hyphal and hydroxyferricrocin (HFC) for conidial iron distribution and storage. TAFC consists of 3 N(2)-acetyl-N(5)-anhydromevalonyl-N(5)-hydroxyornithine residues cyclically linked by ester bonds; FC is a cyclic hexapeptide with the structure Gly-Ser-Gly-(N(5)-acetyl-N(5)-hydroxyornithine)x3. The biosynthesis of all four siderophores depends on the hydroxylation of ornithine, catalyzed by the monooxygenase sidA. Subsequently, the pathways for biosynthesis of extra- and intracellular siderophores split. For biosynthesis of extracellular siderophores, the transacylase sidF transfers anhydromevalonyl to N(5)-hydroxyornithine. The required anhydromevalonyl-CoA moiety is derived from mevalonate by CoA ligation and dehydration catalyzed by sidI and sidH respectively. The acetylation of N(5)-hydroxyornithine for FC biosynthesis involves the constitutively expressed sidL. FC is hydroxylated to HFC by an as yet uncharacterized enzyme during conidiation. Assembly of fusarinine C (FsC) and FC is catalyzed by two different nonribosomal peptide synthetases (NRPS), sidD and sidC respectively. Subsequently, sidG catalyzes N2-acetylation of FsC for forming TAFC. Both extra- and intracellular siderophores are crucial for growth during iron limitation and virulence. The protein is FsC-acetyl coenzyme A-N(2)-transacetylase of Aspergillus fumigatus (strain ATCC MYA-4609 / CBS 101355 / FGSC A1100 / Af293) (Neosartorya fumigata).